Reading from the N-terminus, the 218-residue chain is MEKSGLVAKEGYPFMAIFIGVAAVSSALSWYGIVQFVLWVLAGWCIWFFRDPERHSDAPEDAVIAPADGRVVAIREMEKGPLTDEPVRMVSIFMNVFNVHVNRAPIAGTVTKISYHPGKFVNADLDKASIENERNVLLMESPAGVKMAFQQVAGLVARRIVCRINEGTVLQRGERFGLIRFGSRVDLFFPMDAEISVKLGEMTHSGVTQMGRLKGKES.

The Schiff-base intermediate with substrate; via pyruvic acid role is filled by serine 183. The residue at position 183 (serine 183) is a Pyruvic acid (Ser); by autocatalysis.

It belongs to the phosphatidylserine decarboxylase family. PSD-A subfamily. As to quaternary structure, heterodimer of a large membrane-associated beta subunit and a small pyruvoyl-containing alpha subunit. Pyruvate is required as a cofactor. Post-translationally, is synthesized initially as an inactive proenzyme. Formation of the active enzyme involves a self-maturation process in which the active site pyruvoyl group is generated from an internal serine residue via an autocatalytic post-translational modification. Two non-identical subunits are generated from the proenzyme in this reaction, and the pyruvate is formed at the N-terminus of the alpha chain, which is derived from the carboxyl end of the proenzyme. The post-translation cleavage follows an unusual pathway, termed non-hydrolytic serinolysis, in which the side chain hydroxyl group of the serine supplies its oxygen atom to form the C-terminus of the beta chain, while the remainder of the serine residue undergoes an oxidative deamination to produce ammonia and the pyruvoyl prosthetic group on the alpha chain.

The protein resides in the cell membrane. The enzyme catalyses a 1,2-diacyl-sn-glycero-3-phospho-L-serine + H(+) = a 1,2-diacyl-sn-glycero-3-phosphoethanolamine + CO2. It functions in the pathway phospholipid metabolism; phosphatidylethanolamine biosynthesis; phosphatidylethanolamine from CDP-diacylglycerol: step 2/2. In terms of biological role, catalyzes the formation of phosphatidylethanolamine (PtdEtn) from phosphatidylserine (PtdSer). The protein is Phosphatidylserine decarboxylase proenzyme of Magnetococcus marinus (strain ATCC BAA-1437 / JCM 17883 / MC-1).